Consider the following 258-residue polypeptide: uncharacterized protein (258 aa).

6 helical membrane passes run 24–44, 70–90, 100–120, 130–150, 157–177, and 181–201; these read IPLF…VNIF, PLVH…FLLM, LCTI…AYLI, VYVG…LNLF, LLNL…VLGL, and FSIT…FSFA. The active site involves histidine 188.

It belongs to the peptidase S54 family.

The protein localises to the golgi apparatus membrane. This is an uncharacterized protein from Schizosaccharomyces pombe (strain 972 / ATCC 24843) (Fission yeast).